Reading from the N-terminus, the 81-residue chain is Photosystem I iron-sulfur center (81 aa).

4Fe-4S ferredoxin-type domains are found at residues Met-1 to Trp-31 and Gly-37 to Tyr-68. The [4Fe-4S] cluster site is built by Cys-11, Cys-14, Cys-17, Cys-21, Cys-48, Cys-51, Cys-54, and Cys-58.

As to quaternary structure, the cyanobacterial PSI reaction center is composed of one copy each of PsaA,B,C,D,E,F,I,J,K,L,M and X, and forms trimeric complexes. The cofactor is [4Fe-4S] cluster.

The protein localises to the cellular thylakoid membrane. The catalysed reaction is reduced [plastocyanin] + hnu + oxidized [2Fe-2S]-[ferredoxin] = oxidized [plastocyanin] + reduced [2Fe-2S]-[ferredoxin]. In terms of biological role, apoprotein for the two 4Fe-4S centers FA and FB of photosystem I (PSI); essential for photochemical activity. FB is the terminal electron acceptor of PSI, donating electrons to ferredoxin. The C-terminus interacts with PsaA/B/D and helps assemble the protein into the PSI complex. Required for binding of PsaD and PsaE to PSI. PSI is a plastocyanin/cytochrome c6-ferredoxin oxidoreductase, converting photonic excitation into a charge separation, which transfers an electron from the donor P700 chlorophyll pair to the spectroscopically characterized acceptors A0, A1, FX, FA and FB in turn. The sequence is that of Photosystem I iron-sulfur center from Acaryochloris marina (strain MBIC 11017).